Consider the following 421-residue polypeptide: Immunoglobulin heavy constant epsilon (421 aa).

Ig-like domains follow at residues 5–97 (PQLY…VNIT), 99–184 (PTLE…KVTS), 201–301 (PRGV…RSIT), and 310–410 (PEVY…KTIS). Cysteines 23 and 75 form a disulfide. Asparagine 43, asparagine 72, asparagine 84, asparagine 95, asparagine 166, asparagine 238, asparagine 261, asparagine 365, and asparagine 415 each carry an N-linked (GlcNAc...) asparagine glycan. Cystine bridges form between cysteine 121–cysteine 180, cysteine 226–cysteine 285, and cysteine 330–cysteine 392.

As to quaternary structure, the basic structural unit consists of two identical heavy chains and two identical light chains; disulfide-linked. N-terminal variable regions of the heavy and light chains form the antigen binding sites, whereas the C-terminal constant regions of the heavy chains interact with immune receptors to mediate effector functions.

It is found in the secreted. Its subcellular location is the cell membrane. In terms of biological role, constant region of immunoglobulin heavy chains. Immunoglobulins, also known as antibodies, are membrane-bound or secreted glycoproteins produced by B lymphocytes. In the recognition phase of humoral immunity, the membrane-bound immunoglobulins serve as receptors which, upon binding of a specific antigen, trigger the clonal expansion and differentiation of B lymphocytes into immunoglobulins-secreting plasma cells. Secreted immunoglobulins mediate the effector phase of humoral immunity, which results in the elimination of bound antigens. The antigen binding site is formed by the variable domain of one heavy chain, together with that of its associated light chain. Thus, each immunoglobulin has two antigen binding sites with remarkable affinity for a particular antigen. The variable domains are assembled by a process called V-(D)-J rearrangement and can then be subjected to somatic hypermutations which, after exposure to antigen and selection, allow affinity maturation for a particular antigen. The protein is Immunoglobulin heavy constant epsilon of Mus musculus (Mouse).